The chain runs to 608 residues: Protein UL27 (608 aa).

Residues 1–13 (MNPVDQPPPPLPT) are compositionally biased toward pro residues. Residues 1 to 33 (MNPVDQPPPPLPTQQPEEQAKEDHDDGDERLFR) form a disordered region. The span at 18–33 (EQAKEDHDDGDERLFR) shows a compositional bias: basic and acidic residues.

It belongs to the herpesviridae U4 family. As to quaternary structure, interacts with host KAT5, PSME3 and EP400.

The protein resides in the host nucleus. It is found in the host nucleolus. In terms of biological role, promotes a cell cycle arrest in G0/G1 by inducing the proteasomal degradation of host histone acetyltransferase KAT5/Tip60. The chain is Protein UL27 (UL27) from Human cytomegalovirus (strain AD169) (HHV-5).